The sequence spans 337 residues: ATP-dependent 6-phosphofructokinase (337 aa).

Glycine 11 is a binding site for ATP. 21–25 serves as a coordination point for ADP; the sequence is RAVVR. Residues 72-73 and 102-105 contribute to the ATP site; these read RY and GDGS. Aspartate 103 contributes to the Mg(2+) binding site. 125 to 127 lines the substrate pocket; sequence TID. The active-site Proton acceptor is the aspartate 127. ADP is bound at residue arginine 154. Residues arginine 162 and 169–171 contribute to the substrate site; that span reads MGR. ADP-binding positions include 185–187, lysine 212, and 214–216; these read GAD and KNH. Substrate contacts are provided by residues glutamate 223, arginine 245, and 251–254; that span reads HILR.

This sequence belongs to the phosphofructokinase type A (PFKA) family. ATP-dependent PFK group I subfamily. Prokaryotic clade 'B1' sub-subfamily. Homotetramer. Mg(2+) serves as cofactor.

Its subcellular location is the cytoplasm. The enzyme catalyses beta-D-fructose 6-phosphate + ATP = beta-D-fructose 1,6-bisphosphate + ADP + H(+). Its pathway is carbohydrate degradation; glycolysis; D-glyceraldehyde 3-phosphate and glycerone phosphate from D-glucose: step 3/4. Its activity is regulated as follows. Allosterically activated by ADP and other diphosphonucleosides, and allosterically inhibited by phosphoenolpyruvate. In terms of biological role, catalyzes the phosphorylation of D-fructose 6-phosphate to fructose 1,6-bisphosphate by ATP, the first committing step of glycolysis. This Streptococcus pyogenes serotype M28 (strain MGAS6180) protein is ATP-dependent 6-phosphofructokinase.